Consider the following 131-residue polypeptide: Large ribosomal subunit protein bL19c (131 aa).

Belongs to the bacterial ribosomal protein bL19 family.

It is found in the plastid. The protein localises to the cyanelle. This protein is located at the 30S-50S ribosomal subunit interface and may play a role in the structure and function of the aminoacyl-tRNA binding site. The sequence is that of Large ribosomal subunit protein bL19c (rpl19) from Cyanophora paradoxa.